Here is an 89-residue protein sequence, read N- to C-terminus: Small ribosomal subunit protein uS15 (89 aa).

It belongs to the universal ribosomal protein uS15 family. As to quaternary structure, part of the 30S ribosomal subunit. Forms a bridge to the 50S subunit in the 70S ribosome, contacting the 23S rRNA.

One of the primary rRNA binding proteins, it binds directly to 16S rRNA where it helps nucleate assembly of the platform of the 30S subunit by binding and bridging several RNA helices of the 16S rRNA. In terms of biological role, forms an intersubunit bridge (bridge B4) with the 23S rRNA of the 50S subunit in the ribosome. In Prochlorococcus marinus (strain MIT 9312), this protein is Small ribosomal subunit protein uS15.